The primary structure comprises 263 residues: Glutamate racemase (263 aa).

Substrate is bound by residues 10-11 (DS) and 42-43 (YG). The active-site Proton donor/acceptor is the cysteine 73. A substrate-binding site is contributed by 74–75 (NS). The active-site Proton donor/acceptor is the cysteine 183. Residue 184-185 (TH) participates in substrate binding.

The protein belongs to the aspartate/glutamate racemases family.

It catalyses the reaction L-glutamate = D-glutamate. It functions in the pathway cell wall biogenesis; peptidoglycan biosynthesis. In terms of biological role, provides the (R)-glutamate required for cell wall biosynthesis. This Acidothermus cellulolyticus (strain ATCC 43068 / DSM 8971 / 11B) protein is Glutamate racemase.